A 151-amino-acid chain; its full sequence is Caveolin-3 (151 aa).

At methionine 1–proline 83 the chain is on the cytoplasmic side. Residue lysine 38 forms a Glycyl lysine isopeptide (Lys-Gly) (interchain with G-Cter in SUMO3) linkage. Residues threonine 64–isoleucine 114 are required for interaction with DAG1. The segment at residues leucine 84–valine 104 is an intramembrane region (helical). At proline 105–valine 151 the chain is on the cytoplasmic side.

Belongs to the caveolin family. As to quaternary structure, homooligomer. Interacts with DLG1 and KCNA5; forms a ternary complex. Interacts with TRIM72. Interacts with MUSK; may regulate MUSK signaling. Interacts with DAG1 (via its C-terminal); the interaction prevents binding of DAG1 with DMD. Interacts with DYSF. Interacts with POPDC1. Interacts with CAVIN1 and CAVIN2. Interacts with CAVIN4. In terms of processing, sumoylation with SUMO3 by PIAS4 may reduce agonist-induced internalization and desensitization of adrenergic receptor ABRD2. In terms of tissue distribution, expressed predominantly in muscle.

It is found in the golgi apparatus membrane. It localises to the cell membrane. The protein localises to the membrane. The protein resides in the caveola. Its subcellular location is the sarcolemma. Its function is as follows. May act as a scaffolding protein within caveolar membranes. Interacts directly with G-protein alpha subunits and can functionally regulate their activity. May also regulate voltage-gated potassium channels. Plays a role in the sarcolemma repair mechanism of both skeletal muscle and cardiomyocytes that permits rapid resealing of membranes disrupted by mechanical stress. Mediates the recruitment of CAVIN2 and CAVIN3 proteins to the caveolae. The polypeptide is Caveolin-3 (CAV3) (Homo sapiens (Human)).